Consider the following 89-residue polypeptide: Small ribosomal subunit protein uS15 (89 aa).

This sequence belongs to the universal ribosomal protein uS15 family. As to quaternary structure, part of the 30S ribosomal subunit. Forms a bridge to the 50S subunit in the 70S ribosome, contacting the 23S rRNA.

Functionally, one of the primary rRNA binding proteins, it binds directly to 16S rRNA where it helps nucleate assembly of the platform of the 30S subunit by binding and bridging several RNA helices of the 16S rRNA. In terms of biological role, forms an intersubunit bridge (bridge B4) with the 23S rRNA of the 50S subunit in the ribosome. The sequence is that of Small ribosomal subunit protein uS15 from Shewanella piezotolerans (strain WP3 / JCM 13877).